We begin with the raw amino-acid sequence, 127 residues long: Large ribosomal subunit protein uL22 (127 aa).

The protein belongs to the universal ribosomal protein uL22 family. Part of the 50S ribosomal subunit.

Its function is as follows. This protein binds specifically to 23S rRNA; its binding is stimulated by other ribosomal proteins, e.g. L4, L17, and L20. It is important during the early stages of 50S assembly. It makes multiple contacts with different domains of the 23S rRNA in the assembled 50S subunit and ribosome. In terms of biological role, the globular domain of the protein is located near the polypeptide exit tunnel on the outside of the subunit, while an extended beta-hairpin is found that lines the wall of the exit tunnel in the center of the 70S ribosome. The polypeptide is Large ribosomal subunit protein uL22 (Methylorubrum populi (strain ATCC BAA-705 / NCIMB 13946 / BJ001) (Methylobacterium populi)).